Reading from the N-terminus, the 384-residue chain is 8-amino-7-oxononanoate synthase (384 aa).

Arg21 is a substrate binding site. 108 to 109 (GF) provides a ligand contact to pyridoxal 5'-phosphate. His133 serves as a coordination point for substrate. Residues Ser179, His207, and Thr233 each coordinate pyridoxal 5'-phosphate. At Lys236 the chain carries N6-(pyridoxal phosphate)lysine. Thr352 lines the substrate pocket.

The protein belongs to the class-II pyridoxal-phosphate-dependent aminotransferase family. BioF subfamily. As to quaternary structure, homodimer. It depends on pyridoxal 5'-phosphate as a cofactor.

It catalyses the reaction 6-carboxyhexanoyl-[ACP] + L-alanine + H(+) = (8S)-8-amino-7-oxononanoate + holo-[ACP] + CO2. It functions in the pathway cofactor biosynthesis; biotin biosynthesis. Catalyzes the decarboxylative condensation of pimeloyl-[acyl-carrier protein] and L-alanine to produce 8-amino-7-oxononanoate (AON), [acyl-carrier protein], and carbon dioxide. The polypeptide is 8-amino-7-oxononanoate synthase (Escherichia coli O7:K1 (strain IAI39 / ExPEC)).